We begin with the raw amino-acid sequence, 179 residues long: ADP-ribosylation factor 1-like 1 (179 aa).

The N-myristoyl glycine moiety is linked to residue G2. The tract at residues 3–16 (LFFSKISSFMFPNI) is important for the stable binding to the membranes. Residues 24–32 (GLDGAGKTT), 126–129 (NKQD), and A160 each bind GTP.

Belongs to the small GTPase superfamily. Arf family.

Its subcellular location is the golgi apparatus membrane. The catalysed reaction is GTP + H2O = GDP + phosphate + H(+). Alternates between an inactive GDP-bound form and an active GTP-bound form. Activated by a guanine nucleotide-exchange factor (GEF) and inactivated by GTPase-activating protein (GAP). Its function is as follows. Small GTPase involved in protein trafficking between different compartments. Modulates vesicle budding and uncoating within the Golgi complex. In its GTP-bound form, triggers the recruitment of coatomer proteins to the Golgi membrane. The hydrolysis of ARF1-bound GTP, which is mediated by ARFGAPs proteins, is required for dissociation of coat proteins from Golgi membranes and vesicles. In Caenorhabditis elegans, this protein is ADP-ribosylation factor 1-like 1 (arf-1.1).